Reading from the N-terminus, the 733-residue chain is Zinc finger transcription factor ace1 (733 aa).

Residues 1 to 11 (MSFSNPRRRTP) show a composition bias toward basic residues. Disordered stretches follow at residues 1 to 22 (MSFS…CEHG), 34 to 63 (GATF…SQSA), and 89 to 183 (ASLS…SSTT). Over residues 39-49 (SPTSPSASSAA) the composition is skewed to low complexity. Residues 132–142 (LRPRSVRRTRN) are compositionally biased toward basic residues. Over residues 148-158 (GIGSSVVSTND) the composition is skewed to polar residues. Over residues 171–183 (ASALTRSAASSTT) the composition is skewed to low complexity. C2H2-type zinc fingers lie at residues 400 to 424 (KKCR…EKTH), 428 to 456 (WKCP…NDKH), and 463 to 488 (YECL…EKAH). A disordered region spans residues 497–533 (TNGKKAPSQNGSTAQQTPPLANVSTPSSTPSYSVPTP). Residues 503–515 (PSQNGSTAQQTPP) show a composition bias toward polar residues. Low complexity predominate over residues 519 to 530 (VSTPSSTPSYSV).

It is found in the nucleus. Binds to the promoter of the cbh1 gene and activates transcription. The chain is Zinc finger transcription factor ace1 (ace1) from Hypocrea jecorina (Trichoderma reesei).